Consider the following 372-residue polypeptide: Cytochrome b (372 aa).

Transmembrane regions (helical) follow at residues 25 to 45, 69 to 90, 105 to 125, and 170 to 190; these read FGSM…FLAI, WMMQ…YIHI, WLSG…GYVL, and FFAL…IHIM. Positions 75 and 89 each coordinate heme b. Heme b is bound by residues histidine 174 and histidine 188. Histidine 193 serves as a coordination point for a ubiquinone. 4 helical membrane passes run 218–238, 280–300, 312–332, and 339–358; these read HKDM…MSFM, LGGT…PFTH, LMQF…WAAT, and FTTI…IMNP.

The protein belongs to the cytochrome b family. In terms of assembly, the cytochrome bc1 complex contains 3 respiratory subunits (MT-CYB, CYC1 and UQCRFS1), 2 core proteins (UQCRC1 and UQCRC2) and probably 6 low-molecular weight proteins. Heme b serves as cofactor.

The protein localises to the mitochondrion inner membrane. Its function is as follows. Component of the ubiquinol-cytochrome c reductase complex (complex III or cytochrome b-c1 complex) that is part of the mitochondrial respiratory chain. The b-c1 complex mediates electron transfer from ubiquinol to cytochrome c. Contributes to the generation of a proton gradient across the mitochondrial membrane that is then used for ATP synthesis. The sequence is that of Cytochrome b (MT-CYB) from Pantherophis obsoletus (Black ratsnake).